We begin with the raw amino-acid sequence, 179 residues long: Ribosome-recycling factor (179 aa).

Belongs to the RRF family.

Its subcellular location is the cytoplasm. Functionally, responsible for the release of ribosomes from messenger RNA at the termination of protein biosynthesis. May increase the efficiency of translation by recycling ribosomes from one round of translation to another. This is Ribosome-recycling factor from Chlamydia muridarum (strain MoPn / Nigg).